A 229-amino-acid polypeptide reads, in one-letter code: Ferric nitrobindin-like protein (229 aa).

The tract at residues 1–54 (MSENSTPNNPVVPGAGADGPSLSDSASISGSDAVNLAAEQSKSTAHRNIPGLGD) is disordered. Over residues 18-33 (DGPSLSDSASISGSDA) the composition is skewed to low complexity. Positions 82 to 88 (GVWRGEG) match the GXWXGXG motif.

The protein belongs to the nitrobindin family.

The chain is Ferric nitrobindin-like protein from Corynebacterium glutamicum (strain R).